The primary structure comprises 292 residues: UPF0696 protein C11orf68 homolog (292 aa).

Low complexity predominate over residues 1-10; that stretch reads MAAAAAAVAG. A disordered region spans residues 1–60; sequence MAAAAAAVAGAGRGGGGGADPGQERSRARSWVGAERSEGRRMEPNEELEEEDSPGGREDG. Residues 11–20 are compositionally biased toward gly residues; that stretch reads AGRGGGGGAD. Residues 35 to 44 are compositionally biased toward basic and acidic residues; it reads ERSEGRRMEP.

Belongs to the UPF0696 family.

This Rattus norvegicus (Rat) protein is UPF0696 protein C11orf68 homolog (Bles03).